A 473-amino-acid polypeptide reads, in one-letter code: Glucose-1-phosphate adenylyltransferase small subunit, chloroplastic/amyloplastic (473 aa).

The tract at residues 1–36 (MDVPLASKTFPSPSPSKREQCNIDGHKSSSKHADLN) is disordered. Residues 16-36 (SKREQCNIDGHKSSSKHADLN) show a composition bias toward basic and acidic residues.

It belongs to the bacterial/plant glucose-1-phosphate adenylyltransferase family. In terms of assembly, heterotetramer. In terms of tissue distribution, abundantly expressed in the whole grains, a slightly less abundant expression is seen in leaves, while a low level expression is seen in the roots. A greater expression is seen in the endosperm than in the embryo and pericarp layers.

The protein localises to the plastid. It is found in the chloroplast. It localises to the amyloplast. It catalyses the reaction alpha-D-glucose 1-phosphate + ATP + H(+) = ADP-alpha-D-glucose + diphosphate. The protein operates within glycan biosynthesis; starch biosynthesis. Insensitive to 3'phosphoglycerate and orthophosphate. Functionally, this protein plays a role in synthesis of starch. It catalyzes the synthesis of the activated glycosyl donor, ADP-glucose from Glc-1-P and ATP. The protein is Glucose-1-phosphate adenylyltransferase small subunit, chloroplastic/amyloplastic (AGP-S) of Triticum aestivum (Wheat).